A 503-amino-acid polypeptide reads, in one-letter code: Alpha-1-syntrophin (503 aa).

PH domains lie at 6 to 263 (RAPR…AQIG) and 287 to 399 (DIKQ…DGCH). Positions 40-68 (LTVSPADGEPGPEPEPAQLNGAAEPGAAP) are disordered. The region spanning 81-164 (RVTVRKADAG…EVVLEVKYMK (84 aa)) is the PDZ domain. 5 positions are modified to phosphoserine: Ser95, Ser178, Ser183, Ser187, and Ser194. The tract at residues 177–203 (TSVGWDSPPASPLQRQPSSPGPQPRNL) is disordered. In terms of domain architecture, SU spans 447 to 503 (PFEKLQMSSDDGTSLLFLDFGGAEGEIQLDLHSCPKTMVFIIHSFLSAKVTRLGLLA). The tract at residues 481-503 (PKTMVFIIHSFLSAKVTRLGLLA) is calmodulin-binding.

Belongs to the syntrophin family. Monomer and homodimer. Interacts with MAPK12, TGFA, GA and F-actin. Interacts with the other members of the syntrophin family: SNTB1 and SNTB2; with dystrophin protein DMD and related proteins DTNA and UTRN; SGCG and SGCA of the dystrophin glycoprotein complex; NOS1; GRB2; calmodulin and the sodium channel proteins SCN4A and SCN5A. Interacts with MYOC; regulates muscle hypertrophy. Interacts with DTNB. Post-translationally, phosphorylated by CaM-kinase II. Phosphorylation may inhibit the interaction with DMD. In terms of tissue distribution, high expression in skeletal muscle. Expressed at intermediate level in heart, kidney and brain, and at low level in intestine, liver, lung and testis.

The protein localises to the cell membrane. Its subcellular location is the sarcolemma. It is found in the cell junction. The protein resides in the cytoplasm. It localises to the cytoskeleton. Functionally, adapter protein that binds to and probably organizes the subcellular localization of a variety of membrane proteins. May link various receptors to the actin cytoskeleton and the extracellular matrix via the dystrophin glycoprotein complex. Plays an important role in synapse formation and in the organization of UTRN and acetylcholine receptors at the neuromuscular synapse. Binds to phosphatidylinositol 4,5-bisphosphate. This chain is Alpha-1-syntrophin (Snta1), found in Mus musculus (Mouse).